Here is a 441-residue protein sequence, read N- to C-terminus: Histidine--tRNA ligase (441 aa).

Belongs to the class-II aminoacyl-tRNA synthetase family. Homodimer.

Its subcellular location is the cytoplasm. The catalysed reaction is tRNA(His) + L-histidine + ATP = L-histidyl-tRNA(His) + AMP + diphosphate + H(+). The sequence is that of Histidine--tRNA ligase from Koribacter versatilis (strain Ellin345).